The chain runs to 168 residues: Large ribosomal subunit protein bL17 (168 aa).

Residues 124 to 168 (QATGEAEAATKRAAKDAEGSAEVSEAKVDTTKADDEAAAEESKDA) are disordered. The span at 131-168 (AATKRAAKDAEGSAEVSEAKVDTTKADDEAAAEESKDA) shows a compositional bias: basic and acidic residues.

This sequence belongs to the bacterial ribosomal protein bL17 family. Part of the 50S ribosomal subunit. Contacts protein L32.

This is Large ribosomal subunit protein bL17 from Streptomyces coelicolor (strain ATCC BAA-471 / A3(2) / M145).